The sequence spans 1133 residues: DNA-directed RNA polymerase III subunit RPC2 (1133 aa).

Lys186 is a binding site for RNA. Residue Arg195 coordinates DNA. Residue Arg213 coordinates RNA. Asp432 is a binding site for DNA. Positions 438 and 692 each coordinate RNA. Position 753 (Asp753) interacts with Mg(2+). RNA contacts are provided by Lys896, Lys904, and Lys1019. DNA contacts are provided by Arg1039, Ser1040, and Arg1046. Positions 1080, 1083, 1092, and 1095 each coordinate Zn(2+). Residues 1080–1095 form a C4-type zinc finger; sequence CGQCGLLGYSGWCHYC.

Belongs to the RNA polymerase beta chain family. In terms of assembly, component of the RNA polymerase III (Pol III) complex consisting of 17 subunits: a ten-subunit catalytic core composed of POLR3A/RPC1, POLR3B/RPC2, POLR1C/RPAC1, POLR1D/RPAC2, POLR3K/RPC10, POLR2E/RPABC1, POLR2F/RPABC2, POLR2H/RPABC3, POLR2K/RPABC4 and POLR2L/RPABC5; a mobile stalk composed of two subunits POLR3H/RPC8 and CRCP/RPC9, protruding from the core and functioning primarily in transcription initiation; and additional subunits homologous to general transcription factors of the RNA polymerase II machinery, POLR3C/RPC3-POLR3F/RPC6-POLR3G/RPC7 heterotrimer required for transcription initiation and POLR3D/RPC4-POLR3E/RPC5 heterodimer involved in both transcription initiation and termination. The cofactor is Mg(2+).

It localises to the nucleus. The protein localises to the cytoplasm. The protein resides in the cytosol. It catalyses the reaction RNA(n) + a ribonucleoside 5'-triphosphate = RNA(n+1) + diphosphate. In terms of biological role, catalytic core component of RNA polymerase III (Pol III), a DNA-dependent RNA polymerase which synthesizes small non-coding RNAs using the four ribonucleoside triphosphates as substrates. Synthesizes 5S rRNA, snRNAs, tRNAs and miRNAs from at least 500 distinct genomic loci. Pol III-mediated transcription cycle proceeds through transcription initiation, transcription elongation and transcription termination stages. During transcription initiation, Pol III is recruited to DNA promoters type I, II or III with the help of general transcription factors and other specific initiation factors. Once the polymerase has escaped from the promoter it enters the elongation phase during which RNA is actively polymerized, based on complementarity with the template DNA strand. Transcription termination involves the release of the RNA transcript and polymerase from the DNA. Forms Pol III active center together with the largest subunit POLR3A/RPC1. A single-stranded DNA template strand of the promoter is positioned within the central active site cleft of Pol III. Appends one nucleotide at a time to the 3' end of the nascent RNA, with POLR3A/RPC1 contributing a Mg(2+)-coordinating DxDGD motif, and POLR3B/RPC2 participating in the coordination of a second Mg(2+) ion and providing lysine residues believed to facilitate Watson-Crick base pairing between the incoming nucleotide and template base. Typically, Mg(2+) ions direct a 5' nucleoside triphosphate to form a phosphodiester bond with the 3' hydroxyl of the preceding nucleotide of the nascent RNA, with the elimination of pyrophosphate. Pol III plays a key role in sensing and limiting infection by intracellular bacteria and DNA viruses. Acts as a nuclear and cytosolic DNA sensor involved in innate immune response. Can sense non-self dsDNA that serves as template for transcription into dsRNA. The non-self RNA polymerase III transcripts, such as Epstein-Barr virus-encoded RNAs (EBERs) induce type I interferon and NF-kappa-B through the RIG-I pathway. The chain is DNA-directed RNA polymerase III subunit RPC2 from Homo sapiens (Human).